The following is a 425-amino-acid chain: Serine--tRNA ligase (425 aa).

Residue 229-231 (TSE) coordinates L-serine. Residues 259–261 (RKE) and valine 275 each bind ATP. Residue glutamate 282 participates in L-serine binding. 349–352 (EVTS) serves as a coordination point for ATP. Threonine 384 is a binding site for L-serine.

It belongs to the class-II aminoacyl-tRNA synthetase family. Type-1 seryl-tRNA synthetase subfamily. Homodimer. The tRNA molecule binds across the dimer.

It is found in the cytoplasm. The enzyme catalyses tRNA(Ser) + L-serine + ATP = L-seryl-tRNA(Ser) + AMP + diphosphate + H(+). The catalysed reaction is tRNA(Sec) + L-serine + ATP = L-seryl-tRNA(Sec) + AMP + diphosphate + H(+). Its pathway is aminoacyl-tRNA biosynthesis; selenocysteinyl-tRNA(Sec) biosynthesis; L-seryl-tRNA(Sec) from L-serine and tRNA(Sec): step 1/1. Catalyzes the attachment of serine to tRNA(Ser). Is also able to aminoacylate tRNA(Sec) with serine, to form the misacylated tRNA L-seryl-tRNA(Sec), which will be further converted into selenocysteinyl-tRNA(Sec). The polypeptide is Serine--tRNA ligase (Borrelia garinii subsp. bavariensis (strain ATCC BAA-2496 / DSM 23469 / PBi) (Borreliella bavariensis)).